Here is a 571-residue protein sequence, read N- to C-terminus: Proline--tRNA ligase (571 aa).

Belongs to the class-II aminoacyl-tRNA synthetase family. ProS type 1 subfamily. In terms of assembly, homodimer.

It localises to the cytoplasm. It catalyses the reaction tRNA(Pro) + L-proline + ATP = L-prolyl-tRNA(Pro) + AMP + diphosphate. Catalyzes the attachment of proline to tRNA(Pro) in a two-step reaction: proline is first activated by ATP to form Pro-AMP and then transferred to the acceptor end of tRNA(Pro). As ProRS can inadvertently accommodate and process non-cognate amino acids such as alanine and cysteine, to avoid such errors it has two additional distinct editing activities against alanine. One activity is designated as 'pretransfer' editing and involves the tRNA(Pro)-independent hydrolysis of activated Ala-AMP. The other activity is designated 'posttransfer' editing and involves deacylation of mischarged Ala-tRNA(Pro). The misacylated Cys-tRNA(Pro) is not edited by ProRS. In Vibrio parahaemolyticus serotype O3:K6 (strain RIMD 2210633), this protein is Proline--tRNA ligase.